We begin with the raw amino-acid sequence, 1121 residues long: Piwi-like protein ergo-1 (1121 aa).

Over residues 1-14 (MSYNNGGGGGGGGY) the composition is skewed to gly residues. The segment at 1–134 (MSYNNGGGGG…GNRGGGGGRV (134 aa)) is disordered. Basic and acidic residues-rich tracts occupy residues 15 to 29 (RNDR…DRQN) and 40 to 77 (YNDD…DRRG). The segment covering 99–112 (GSNQRNDNYGNNRG) has biased composition (polar residues). Over residues 125–134 (GNRGGGGGRV) the composition is skewed to gly residues. The PAZ domain occupies 426-534 (VMTQILTKMT…MPLELVSYIV (109 aa)). The region spanning 774–1081 (NVLKYLADNK…AAKRAKETLD (308 aa)) is the Piwi domain.

The protein belongs to the argonaute family. Piwi subfamily. As to quaternary structure, interacts with rde-12. Interacts with rde-10. Highly expressed in the germline in hermaphrodites.

It is found in the cytoplasm. Argonaute protein required for gene silencing in the endogenous RNA interference (RNAi) pathway. Involved in the 26G RNAi pathway and associates with both unmethylated and methylated 26G small interfering RNAs (26G-siRNAs), which are a class of 26 nucleotide siRNAs that possess a guanine residue at the 5'-end. Associated 26G-siRNAs are methylated by the methyltransferase henn-1, which stabilizes the siRNAs. Association with 26G-siRNAs is required for the biogenesis of secondary 22G-siRNAs (a class of 22 nucleotide siRNAs that possess a triphosphorylated guanine residue at the 5'-end). May be involved in passenger strand cleavage of target 26G-siRNAs. This chain is Piwi-like protein ergo-1, found in Caenorhabditis elegans.